The sequence spans 155 residues: MKIKILCFGKLDKKFYIDAFNDYFKRLKKYVDLEIIELKEEVNGELNKIKDENSNLLLKKLQNYKDFEKVVLDVNSRLISTENLVEIIKTNLNYKSAKILFIIGPSDGYSKSFLNSFTNKFSLAKITLPHQLCRIVLIEQIYRVFKIINNEKYHK.

Residues Leu72, Gly104, and Leu123–Leu128 contribute to the S-adenosyl-L-methionine site.

It belongs to the RNA methyltransferase RlmH family. Homodimer.

It is found in the cytoplasm. The catalysed reaction is pseudouridine(1915) in 23S rRNA + S-adenosyl-L-methionine = N(3)-methylpseudouridine(1915) in 23S rRNA + S-adenosyl-L-homocysteine + H(+). In terms of biological role, specifically methylates the pseudouridine at position 1915 (m3Psi1915) in 23S rRNA. The protein is Ribosomal RNA large subunit methyltransferase H of Mycoplasma mycoides subsp. mycoides SC (strain CCUG 32753 / NCTC 10114 / PG1).